A 321-amino-acid polypeptide reads, in one-letter code: Probable arabinan endo-1,5-alpha-L-arabinosidase A (321 aa).

Residues 1 to 19 form the signal peptide; sequence MHPSTFVTTIACLAGLAHG. Asp34 acts as the Proton acceptor in catalysis. Residue Glu200 is the Proton donor of the active site.

Belongs to the glycosyl hydrolase 43 family.

It is found in the secreted. It carries out the reaction Endohydrolysis of (1-&gt;5)-alpha-arabinofuranosidic linkages in (1-&gt;5)-arabinans.. Its pathway is glycan metabolism; L-arabinan degradation. Its function is as follows. Endo-1,5-alpha-L-arabinanase involved in degradation of pectin. Its preferred substrate is linear 1,5-alpha-L-arabinan. This Aspergillus clavatus (strain ATCC 1007 / CBS 513.65 / DSM 816 / NCTC 3887 / NRRL 1 / QM 1276 / 107) protein is Probable arabinan endo-1,5-alpha-L-arabinosidase A (abnA).